A 257-amino-acid polypeptide reads, in one-letter code: tRNA pseudouridine synthase A (257 aa).

Aspartate 52 acts as the Nucleophile in catalysis. Tyrosine 111 is a binding site for substrate.

The protein belongs to the tRNA pseudouridine synthase TruA family. In terms of assembly, homodimer.

The catalysed reaction is uridine(38/39/40) in tRNA = pseudouridine(38/39/40) in tRNA. Formation of pseudouridine at positions 38, 39 and 40 in the anticodon stem and loop of transfer RNAs. This Cereibacter sphaeroides (strain ATCC 17025 / ATH 2.4.3) (Rhodobacter sphaeroides) protein is tRNA pseudouridine synthase A.